Here is a 1257-residue protein sequence, read N- to C-terminus: Endochitinase A (1257 aa).

Residues 1–21 (MVFKPLTIAAAIAGLTPFVSA) form the signal peptide. A GH18 domain is found at 28–339 (SNVAVYYGQG…DVIKDILVAV (312 aa)). E175 (proton donor) is an active-site residue. 3 disordered regions span residues 364-429 (TPVA…STPV), 595-980 (TPAA…LAPI), and 1141-1174 (DALT…PTTT). Over residues 595–696 (TPAASSSPAV…STPVRSTSSV (102 aa)) the composition is skewed to low complexity. The segment covering 700-715 (KSSSAPVIPKPSSTVI) has biased composition (polar residues). The span at 716-935 (ATFTSSSGSL…ASGSGAQDST (220 aa)) shows a compositional bias: low complexity. The N-linked (GlcNAc...) asparagine glycan is linked to N825. Positions 940 to 964 (HASTLSPSYSTPLASASGQTGSPTT) are enriched in polar residues. N973 carries an N-linked (GlcNAc...) asparagine glycan. Positions 1145-1154 (ASPSGSQPAG) are enriched in polar residues. Over residues 1156–1174 (SSPGQSAPTAPASTAPTTT) the composition is skewed to low complexity. The GPI-anchor amidated glycine moiety is linked to residue G1231. A propeptide spans 1232–1257 (AASRVSRLQHGAGAVSAFALFLLAAI) (removed in mature form).

Belongs to the glycosyl hydrolase 18 family. Chitinase class III subfamily. Post-translationally, O-glycosylated.

It localises to the cell membrane. The protein resides in the secreted. The protein localises to the cell wall. It carries out the reaction Random endo-hydrolysis of N-acetyl-beta-D-glucosaminide (1-&gt;4)-beta-linkages in chitin and chitodextrins.. Functionally, GPI-anchored chitinase involved in the degradation of chitin, a component of the cell walls of fungi and exoskeletal elements of some animals (including worms and arthropods). Required to reshape the cell wall at the sites where cell wall remodeling and/or cell wall maturation actively take place such as sites of conidia formation. This is Endochitinase A (ctcA) from Aspergillus niger (strain ATCC MYA-4892 / CBS 513.88 / FGSC A1513).